The following is a 290-amino-acid chain: 3-keto-disaccharide hydrolase (290 aa).

The N-terminal stretch at 1-19 (MKKVFYPLACCLAAGVLVS) is a signal peptide. Cysteine 20 carries N-palmitoyl cysteine lipidation. Cysteine 20 carries the S-diacylglycerol cysteine lipid modification.

It is found in the cell membrane. It carries out the reaction 3-dehydro-alpha,alpha-trehalose + H2O = 3-dehydro-D-glucose + D-glucose. Its function is as follows. 3-keto-disaccharide hydrolase that preferentially hydrolyzes 3-keto-trehalose (3-dehydro-alpha,alpha-trehalose). Important for disaccharide utilization in the human gut. Also shows hydrolysis activity with the glucosinolates glucoraphanin or glucobrassicin, but with much lower efficiency. The polypeptide is 3-keto-disaccharide hydrolase (Bacteroides thetaiotaomicron (strain ATCC 29148 / DSM 2079 / JCM 5827 / CCUG 10774 / NCTC 10582 / VPI-5482 / E50)).